The sequence spans 497 residues: Glycerol kinase (497 aa).

Thr11 contributes to the ADP binding site. ATP is bound by residues Thr11, Ser12, and Ser13. Residue Thr11 participates in sn-glycerol 3-phosphate binding. Arg15 contacts ADP. Residues Arg81, Glu82, Tyr133, and Asp242 each contribute to the sn-glycerol 3-phosphate site. Positions 81, 82, 133, 242, and 243 each coordinate glycerol. Residues Thr264 and Gly307 each coordinate ADP. Residues Thr264, Gly307, Gln311, and Gly412 each contribute to the ATP site. The ADP site is built by Gly412 and Asn416.

This sequence belongs to the FGGY kinase family.

It carries out the reaction glycerol + ATP = sn-glycerol 3-phosphate + ADP + H(+). It functions in the pathway polyol metabolism; glycerol degradation via glycerol kinase pathway; sn-glycerol 3-phosphate from glycerol: step 1/1. With respect to regulation, inhibited by fructose 1,6-bisphosphate (FBP). Functionally, key enzyme in the regulation of glycerol uptake and metabolism. Catalyzes the phosphorylation of glycerol to yield sn-glycerol 3-phosphate. The protein is Glycerol kinase of Polaromonas naphthalenivorans (strain CJ2).